The chain runs to 178 residues: Caveolin-1 (178 aa).

Ser-2 carries the N-acetylserine modification. Ser-2 carries the phosphoserine modification. The segment at 2–94 (SGGKYVDSEG…WKASFTTFTV (93 aa)) is required for homooligomerization. Over 2–104 (SGGKYVDSEG…TKYWFYRLLS (103 aa)) the chain is Cytoplasmic. An N6-acetyllysine; alternate modification is found at Lys-5. Residue Lys-5 forms a Glycyl lysine isopeptide (Lys-Gly) (interchain with G-Cter in ubiquitin); alternate linkage. Tyr-6 is subject to Phosphotyrosine. At Ser-9 the chain carries Phosphoserine. A Phosphotyrosine; by ABL1 modification is found at Tyr-14. Residue Tyr-25 is modified to Phosphotyrosine. Glycyl lysine isopeptide (Lys-Gly) (interchain with G-Cter in ubiquitin) cross-links involve residues Lys-26, Lys-30, Lys-39, Lys-47, and Lys-57. Residues 82 to 94 (DGIWKASFTTFTV) are interaction with CAVIN3. The segment at residues 105–125 (ALFGIPMALIWGIYFAILSFL) is an intramembrane region (helical). The Cytoplasmic segment spans residues 126-178 (HIWAVVPCIKSFLIEIQCISRVYSIYVHTFCDPLFEAIGKIFSNVRINLQKEI). The interacts with SPRY1, SPRY2, SPRY3 and SPRY4 stretch occupies residues 131-142 (VPCIKSFLIEIQ). Residues Cys-133, Cys-143, and Cys-156 are each lipidated (S-palmitoyl cysteine). Positions 149–160 (SIYVHTFCDPLF) are interacts with SPRY1, SPRY2, and SPRY4. Residues 167–178 (FSNVRINLQKEI) are interacts with SPRY1, SPRY2, SPRY3 and SPRY4.

It belongs to the caveolin family. As to quaternary structure, homooligomer. Interacts with GLIPR2. Interacts with NOSTRIN. Interacts with SNAP25 and STX1A. Interacts (via the N-terminus) with DPP4; the interaction is direct. Interacts with CTNNB1, CDH1 and JUP. Interacts with PACSIN2; this interaction induces membrane tubulation. Interacts with SLC7A9. Interacts with BMX and BTK. Interacts with TGFBR1. Interacts with CAVIN3 (via leucine-zipper domain) in a cholesterol-sensitive manner. Interacts with CAVIN1. Interacts with EHD2 in a cholesterol-dependent manner. Forms a ternary complex with UBXN6 and VCP; mediates CAV1 targeting to lysosomes for degradation. Interacts with ABCG1; this interaction regulates ABCG1-mediated cholesterol efflux. Interacts with NEU3; this interaction enhances NEU3 sialidase activity within caveola. Interacts (via C-terminus) with SPRY1, SPRY2 (via C-terminus), SPRY3, and SPRY4. Interacts with IGFBP5; this interaction allows trafficking of IGFBP5 from the plasma membrane to the nucleus. Post-translationally, phosphorylated at Tyr-14 by ABL1 in response to oxidative stress. Ubiquitinated. Undergo monoubiquitination and multi- and/or polyubiquitination. Monoubiquitination of N-terminal lysines promotes integration in a ternary complex with UBXN6 and VCP which promotes oligomeric CAV1 targeting to lysosomes for degradation. Ubiquitinated by ZNRF1; leading to degradation and modulation of the TLR4-mediated immune response.

Its subcellular location is the golgi apparatus membrane. The protein resides in the cell membrane. It localises to the membrane. It is found in the caveola. The protein localises to the membrane raft. Functionally, may act as a scaffolding protein within caveolar membranes. Forms a stable heterooligomeric complex with CAV2 that targets to lipid rafts and drives caveolae formation. Mediates the recruitment of CAVIN proteins (CAVIN1/2/3/4) to the caveolae. Interacts directly with G-protein alpha subunits and can functionally regulate their activity. Involved in the costimulatory signal essential for T-cell receptor (TCR)-mediated T-cell activation. Its binding to DPP4 induces T-cell proliferation and NF-kappa-B activation in a T-cell receptor/CD3-dependent manner. Recruits CTNNB1 to caveolar membranes and may regulate CTNNB1-mediated signaling through the Wnt pathway. Negatively regulates TGFB1-mediated activation of SMAD2/3 by mediating the internalization of TGFBR1 from membrane rafts leading to its subsequent degradation. Binds 20(S)-hydroxycholesterol (20(S)-OHC). This Equus caballus (Horse) protein is Caveolin-1 (CAV1).